Here is a 223-residue protein sequence, read N- to C-terminus: Deoxyribose-phosphate aldolase (223 aa).

Catalysis depends on Asp-89, which acts as the Proton donor/acceptor. Residue Lys-152 is the Schiff-base intermediate with acetaldehyde of the active site. Lys-181 serves as the catalytic Proton donor/acceptor.

The protein belongs to the DeoC/FbaB aldolase family. DeoC type 1 subfamily.

The protein localises to the cytoplasm. The catalysed reaction is 2-deoxy-D-ribose 5-phosphate = D-glyceraldehyde 3-phosphate + acetaldehyde. Its pathway is carbohydrate degradation; 2-deoxy-D-ribose 1-phosphate degradation; D-glyceraldehyde 3-phosphate and acetaldehyde from 2-deoxy-alpha-D-ribose 1-phosphate: step 2/2. Catalyzes a reversible aldol reaction between acetaldehyde and D-glyceraldehyde 3-phosphate to generate 2-deoxy-D-ribose 5-phosphate. This Listeria monocytogenes serotype 4a (strain HCC23) protein is Deoxyribose-phosphate aldolase.